Here is a 531-residue protein sequence, read N- to C-terminus: UDP-glucuronosyltransferase 2B13 (531 aa).

The first 24 residues, 1–24, serve as a signal peptide directing secretion; sequence MPVKCISVLLLLLQLSCCFSSGSC. N-linked (GlcNAc...) asparagine glycosylation is found at Asn-69, Asn-101, and Asn-317. Residues 495–511 form a helical membrane-spanning segment; sequence VIGFLLACVAITTYLIV.

This sequence belongs to the UDP-glycosyltransferase family.

It is found in the microsome membrane. The protein resides in the endoplasmic reticulum membrane. It catalyses the reaction glucuronate acceptor + UDP-alpha-D-glucuronate = acceptor beta-D-glucuronoside + UDP + H(+). Functionally, UDPGT is of major importance in the conjugation and subsequent elimination of potentially toxic xenobiotics and endogenous compounds. Acts on small phenolic agents such as 2-beta-naphthol and 4-methylumbelliferone as well as bulky phenolic compounds like 2-hydroxy- and 4-hydroxybiphenyl. In contrast to 2B16 it is active toward octylgallate. The chain is UDP-glucuronosyltransferase 2B13 (UGT2B13) from Oryctolagus cuniculus (Rabbit).